A 42-amino-acid polypeptide reads, in one-letter code: Statherin (42 aa).

Residues 1 to 6 (DSSEEK) form a hydroxyapatite-binding; inhibits crystal growth region. Phosphoserine occurs at positions 2 and 3. Positions 18 to 42 (RYGPYQPFVPPPLYPQPYQPYQPQY) are disordered. Positions 18–42 (RYGPYQPFVPPPLYPQPYQPYQPQY) are hydrophobic; inhibits precipitation of calcium phosphate salts. Positions 24 to 42 (PFVPPPLYPQPYQPYQPQY) are enriched in pro residues.

It belongs to the histatin/statherin family. As to expression, secreted by parotid and submandibular glands.

The protein resides in the secreted. Functionally, salivary protein that stabilizes saliva supersaturated with calcium salts by inhibiting the precipitation of calcium phosphate salts. It also modulates hydroxyapatite crystal formation on the tooth surface. This chain is Statherin (STATH), found in Macaca arctoides (Stump-tailed macaque).